The chain runs to 116 residues: Protein Rev (116 aa).

S5 carries the post-translational modification Phosphoserine; by host CK2. Residues 18 to 26 (IIKILYQSN) are homomultimerization. The interval 26–48 (NPYSKPNGSRQARRNRRRRWRAR) is disordered. The Nuclear localization signal and RNA-binding (RRE) motif lies at 34–50 (SRQARRNRRRRWRARQN). Over residues 36–47 (QARRNRRRRWRA) the composition is skewed to basic residues. A Nuclear export signal and binding to XPO1 motif is present at residues 73-84 (LQLPPIERLRLD). S92 carries the phosphoserine; by host modification.

Belongs to the HIV-1 REV protein family. As to quaternary structure, homomultimer; when bound to the RRE. Multimeric assembly is essential for activity and may involve XPO1. Binds to human KPNB1, XPO1, TNPO1, RANBP5 and IPO7. Interacts with the viral Integrase. Interacts with human KHDRBS1. Interacts with human NAP1; this interaction decreases Rev multimerization and stimulates its activity. Interacts with human DEAD-box helicases DDX3 and DDX24; these interactions may serve for viral RNA export to the cytoplasm and packaging, respectively. Interacts with human PSIP1; this interaction may inhibit HIV-1 DNA integration by promoting dissociation of the Integrase-LEDGF/p75 complex. Post-translationally, asymmetrically arginine dimethylated at one site by host PRMT6. Methylation impairs the RNA-binding activity and export of viral RNA from the nucleus to the cytoplasm. Phosphorylated by protein kinase CK2. Presence of, and maybe binding to the N-terminus of the regulatory beta subunit of CK2 is necessary for CK2-mediated Rev's phosphorylation.

The protein resides in the host nucleus. It localises to the host nucleolus. Its subcellular location is the host cytoplasm. In terms of biological role, escorts unspliced or incompletely spliced viral pre-mRNAs (late transcripts) out of the nucleus of infected cells. These pre-mRNAs carry a recognition sequence called Rev responsive element (RRE) located in the env gene, that is not present in fully spliced viral mRNAs (early transcripts). This function is essential since most viral proteins are translated from unspliced or partially spliced pre-mRNAs which cannot exit the nucleus by the pathway used by fully processed cellular mRNAs. Rev itself is translated from a fully spliced mRNA that readily exits the nucleus. Rev's nuclear localization signal (NLS) binds directly to KPNB1/Importin beta-1 without previous binding to KPNA1/Importin alpha-1. KPNB1 binds to the GDP bound form of RAN (Ran-GDP) and targets Rev to the nucleus. In the nucleus, the conversion from Ran-GDP to Ran-GTP dissociates Rev from KPNB1 and allows Rev's binding to the RRE in viral pre-mRNAs. Rev multimerization on the RRE via cooperative assembly exposes its nuclear export signal (NES) to the surface. Rev can then form a complex with XPO1/CRM1 and Ran-GTP, leading to nuclear export of the complex. Conversion from Ran-GTP to Ran-GDP mediates dissociation of the Rev/RRE/XPO1/RAN complex, so that Rev can return to the nucleus for a subsequent round of export. Beside KPNB1, also seems to interact with TNPO1/Transportin-1, RANBP5/IPO5 and IPO7/RANBP7 for nuclear import. The nucleoporin-like HRB/RIP is an essential cofactor that probably indirectly interacts with Rev to release HIV RNAs from the perinuclear region to the cytoplasm. The chain is Protein Rev from Homo sapiens (Human).